The chain runs to 330 residues: Beta-ketoacyl-[acyl-carrier-protein] synthase III (330 aa).

Residues cysteine 114 and histidine 257 contribute to the active site. The tract at residues 258 to 262 (QANLR) is ACP-binding. The active site involves asparagine 287.

Belongs to the thiolase-like superfamily. FabH family. Homodimer.

It is found in the cytoplasm. It catalyses the reaction malonyl-[ACP] + acetyl-CoA + H(+) = 3-oxobutanoyl-[ACP] + CO2 + CoA. It functions in the pathway lipid metabolism; fatty acid biosynthesis. In terms of biological role, catalyzes the condensation reaction of fatty acid synthesis by the addition to an acyl acceptor of two carbons from malonyl-ACP. Catalyzes the first condensation reaction which initiates fatty acid synthesis and may therefore play a role in governing the total rate of fatty acid production. Possesses both acetoacetyl-ACP synthase and acetyl transacylase activities. Its substrate specificity determines the biosynthesis of branched-chain and/or straight-chain of fatty acids. This chain is Beta-ketoacyl-[acyl-carrier-protein] synthase III, found in Nitratidesulfovibrio vulgaris (strain ATCC 29579 / DSM 644 / CCUG 34227 / NCIMB 8303 / VKM B-1760 / Hildenborough) (Desulfovibrio vulgaris).